The primary structure comprises 159 residues: Pathogenesis-related leaf protein 4 (159 aa).

Positions 1–24 are cleaved as a signal peptide; sequence MGLFNISLLLTCLMVLAIFHSCEA. At glutamine 25 the chain carries Pyrrolidone carboxylic acid. One can recognise an SCP domain in the interval 32–147; that stretch reads LAVHNDARAQ…NGWWFISCNY (116 aa). Cystine bridges form between cysteine 68–cysteine 136, cysteine 109–cysteine 115, and cysteine 131–cysteine 145.

It belongs to the CRISP family.

Probably involved in the defense reaction of plants against pathogens. The protein is Pathogenesis-related leaf protein 4 of Solanum lycopersicum (Tomato).